The primary structure comprises 159 residues: Ribosomal RNA large subunit methyltransferase H (159 aa).

Residues Leu76, Gly108, and 127 to 132 contribute to the S-adenosyl-L-methionine site; that span reads FSKMTF.

The protein belongs to the RNA methyltransferase RlmH family. In terms of assembly, homodimer.

The protein resides in the cytoplasm. The catalysed reaction is pseudouridine(1915) in 23S rRNA + S-adenosyl-L-methionine = N(3)-methylpseudouridine(1915) in 23S rRNA + S-adenosyl-L-homocysteine + H(+). Functionally, specifically methylates the pseudouridine at position 1915 (m3Psi1915) in 23S rRNA. This Shouchella clausii (strain KSM-K16) (Alkalihalobacillus clausii) protein is Ribosomal RNA large subunit methyltransferase H.